Here is a 163-residue protein sequence, read N- to C-terminus: NADH-quinone oxidoreductase subunit I (163 aa).

4Fe-4S ferredoxin-type domains are found at residues 53–83 and 94–123; these read LRRYPNGEERCIACKLCEAVCPALAITIEAG and TLYEIDMFKCIYCGFCEESCPVDSIVETRE. The [4Fe-4S] cluster site is built by Cys-63, Cys-66, Cys-69, Cys-73, Cys-103, Cys-106, Cys-109, and Cys-113.

Belongs to the complex I 23 kDa subunit family. In terms of assembly, NDH-1 is composed of 14 different subunits. Subunits NuoA, H, J, K, L, M, N constitute the membrane sector of the complex. It depends on [4Fe-4S] cluster as a cofactor.

Its subcellular location is the cell inner membrane. The catalysed reaction is a quinone + NADH + 5 H(+)(in) = a quinol + NAD(+) + 4 H(+)(out). NDH-1 shuttles electrons from NADH, via FMN and iron-sulfur (Fe-S) centers, to quinones in the respiratory chain. The immediate electron acceptor for the enzyme in this species is believed to be ubiquinone. Couples the redox reaction to proton translocation (for every two electrons transferred, four hydrogen ions are translocated across the cytoplasmic membrane), and thus conserves the redox energy in a proton gradient. This Alkalilimnicola ehrlichii (strain ATCC BAA-1101 / DSM 17681 / MLHE-1) protein is NADH-quinone oxidoreductase subunit I.